A 909-amino-acid chain; its full sequence is Protein translocase subunit SecA (909 aa).

ATP is bound by residues Gln-87, 105 to 109 (GEGKT), and Asp-507. Residues 857–909 (DTHSELAEEQPPVAENRENKQQPFVRKNEKVGRNDPCPCGSGKKYKQCHGKLN) form a disordered region. Basic and acidic residues predominate over residues 871–889 (ENRENKQQPFVRKNEKVGR). The Zn(2+) site is built by Cys-893, Cys-895, Cys-904, and His-905. A compositionally biased stretch (basic residues) spans 899–909 (KKYKQCHGKLN).

Belongs to the SecA family. As to quaternary structure, monomer and homodimer. Part of the essential Sec protein translocation apparatus which comprises SecA, SecYEG and auxiliary proteins SecDF-YajC and YidC. Zn(2+) serves as cofactor.

The protein localises to the cell inner membrane. Its subcellular location is the cytoplasm. It carries out the reaction ATP + H2O + cellular proteinSide 1 = ADP + phosphate + cellular proteinSide 2.. Its function is as follows. Part of the Sec protein translocase complex. Interacts with the SecYEG preprotein conducting channel. Has a central role in coupling the hydrolysis of ATP to the transfer of proteins into and across the cell membrane, serving both as a receptor for the preprotein-SecB complex and as an ATP-driven molecular motor driving the stepwise translocation of polypeptide chains across the membrane. This Nitrosomonas europaea (strain ATCC 19718 / CIP 103999 / KCTC 2705 / NBRC 14298) protein is Protein translocase subunit SecA.